Reading from the N-terminus, the 56-residue chain is Small ribosomal subunit protein uS14 (56 aa).

Ser-9 is modified (phosphoserine). At Arg-12 the chain carries Omega-N-methylarginine. Zn(2+)-binding residues include Cys-21, Cys-24, Cys-39, and Cys-42. Lys-48 carries the post-translational modification N6-acetyllysine.

It belongs to the universal ribosomal protein uS14 family. In terms of assembly, component of the 40S small ribosomal subunit. It depends on Zn(2+) as a cofactor.

It is found in the cytoplasm. The protein localises to the cytosol. It localises to the rough endoplasmic reticulum. Component of the small ribosomal subunit. The ribosome is a large ribonucleoprotein complex responsible for the synthesis of proteins in the cell. The sequence is that of Small ribosomal subunit protein uS14 (RPS29) from Sus scrofa (Pig).